A 667-amino-acid polypeptide reads, in one-letter code: DNA ligase (667 aa).

Residues 34-38 (DQEYD), 83-84 (SL), and glutamate 114 each bind NAD(+). Lysine 116 (N6-AMP-lysine intermediate) is an active-site residue. Residues arginine 137, glutamate 170, lysine 286, and lysine 310 each coordinate NAD(+). Zn(2+)-binding residues include cysteine 404, cysteine 407, cysteine 422, and cysteine 427. The 80-residue stretch at 588 to 667 (HLAQKFENYR…EFQQLLSKED (80 aa)) folds into the BRCT domain.

It belongs to the NAD-dependent DNA ligase family. LigA subfamily. It depends on Mg(2+) as a cofactor. The cofactor is Mn(2+).

It catalyses the reaction NAD(+) + (deoxyribonucleotide)n-3'-hydroxyl + 5'-phospho-(deoxyribonucleotide)m = (deoxyribonucleotide)n+m + AMP + beta-nicotinamide D-nucleotide.. In terms of biological role, DNA ligase that catalyzes the formation of phosphodiester linkages between 5'-phosphoryl and 3'-hydroxyl groups in double-stranded DNA using NAD as a coenzyme and as the energy source for the reaction. It is essential for DNA replication and repair of damaged DNA. The polypeptide is DNA ligase (Spiroplasma citri).